Reading from the N-terminus, the 501-residue chain is Ribose import ATP-binding protein RbsA (501 aa).

ABC transporter domains are found at residues Leu-8–Thr-245 and Val-255–Asn-500. Residue Gly-40 to Ser-47 participates in ATP binding.

It belongs to the ABC transporter superfamily. Ribose importer (TC 3.A.1.2.1) family. The complex is composed of an ATP-binding protein (RbsA), two transmembrane proteins (RbsC) and a solute-binding protein (RbsB).

The protein resides in the cell membrane. The catalysed reaction is D-ribose(out) + ATP + H2O = D-ribose(in) + ADP + phosphate + H(+). Its function is as follows. Part of the ABC transporter complex RbsABC involved in ribose import. Responsible for energy coupling to the transport system. This Clostridium perfringens (strain 13 / Type A) protein is Ribose import ATP-binding protein RbsA.